The primary structure comprises 146 residues: Hemoglobin subunit beta-1 (146 aa).

The region spanning 2–146 is the Globin domain; it reads EWTDAEKSTI…VVAAMGSRYF (145 aa). Residues His63 and His92 each coordinate heme b.

Belongs to the globin family. In terms of assembly, heterotetramer of two alpha chains and two beta chains. In terms of tissue distribution, red blood cells.

Its function is as follows. Involved in oxygen transport from gills to the various peripheral tissues. This chain is Hemoglobin subunit beta-1 (hbb1), found in Oncorhynchus mykiss (Rainbow trout).